The sequence spans 1605 residues: MDIYDTQTLGVVVFGGFMVVSAIGIFLVSTFSMKETSYEEALANQRKEMAKTHHQKGEKKKKEKTVEKKGKTKKKEEKPNGKIPEHDLDPNVTIILKEPVRVSAVAVAPTSVHSSVGHTPIATVPAMPQEKLASSPKDRKKKEKKVAKVEPAVSSIVNSIQVLASKSAILEATPKEVPMVAVPPVGSKASSPATSSQGKKGQGAQNQAKKGEGAQNQGKKGEGAQNQAKKGEGAQNQAKKGEGAQNQGKKGEGAQNQAKKGEGGQNQAKKGEGAQNQGKKGEGAQNQGKKGEGAQNQAKKGEGAQNQAKKGEGAQNQGKKGEGAQNQSKKGEGAQNQAKKGEGGQNQAKKGEGAQNQAKKGEGAQNQAKKGEGVQNQAKKGVEGAQNQGKKGEANQNQAKKGEGGQNQTKKGEGPQNQGKKGEAAQKQDKKIEGAQNQGKKPEGTSNQGKKGEGAQNQGKKGEGAQNQSKKGEGAQNQAKKGEGGQNQAKKGEGAQNQAKKGEGAQNQAKKGEGVQNQAKKGVEGAQNQGKKGEANQNQAKKGEGGQNQTKKGEGPQNQGKKGEAAQKQDKKIEGAQNQGKKPEGTSNQGKKGEGAQNQGKKGEGAQNQGKKGEGAQNQGKKGEGAQNQGKKGEGAQNQGKKGEGAQNQGKKGEGAQNQGKKGEGPQNQAKKGEGAQNQGKKGEGAQNQGKKGEGAQNQGKKAEGVQSQSKKGEGTQNQGKKGDGNPNQGKKGEGASNQNRKTDTVANQGTKQEGVSNQVKKSEGSPNQGKKAEGAPNQGKKKDGSPSQAKKVDAAANQGKKSEMAPAQGQKASMVQSQEAPKQDAPAKKKSGSRKKGEPGPPDCDGPLFLPYKTLVSTVGSMVFSEGEAQRLIEILSEKTGVIQDTWHKATQKGDPVAILKRQLQEKEKLLATEQEDAAVAKSKLRELNKEMASEKAKAAAGEAKVKKQLVAREQEIAAVQARMQASYRDHVKEVQQLQGKIRTLQEQLENGPNTQLARLQQENSILRDALNQATSQVESKQNTELAKLRQELSKVNKELVEKSEASRQEEQQRKALEAKAATFEKQVLQLQASHKESEEALQKRLEEVTRELCRAQTSHANLRADAEKAQEQQQRVAELHSKLQSSEVEVKSKCEELSSLHGQLKEARAENSQLTERIRSIEALLEAGQAQDTQASHAEANQQQTRLKELESQVSCLEKETSELKEAMEQQKGKNNDLREKNWKAMEALALAERACEEKLRSLTQAKEESEKQLHLAEAQTKETLLALLPGLSISAHQNYAEWLQEFKEKGSELLKKPPTLEPSMDIVLKLREAEETQNSLQAECDQYRTILAETEGMLKDLQKSVEEEERVWKAKVGAAEEELHKSRVTVKHLEDIVEKLKGELESSDQVREHTSHLEAELEKHMAAASAECQNYAKEVAGLRQLLLESQSQLDEAKSEAQKQSDELALVRQQLSDMRSHVEDGDVAGSPAVPPAEQDPMKLKTQLERTEATLEAEQTRRQKLTAEFEEAQRTACRIQEELEKLRAAGPLESSGKEEITQLKERLEKEKRLTSDLGRAAIKLQELLKTTQEQLTKEKDTVKKLQEQLGKAEDGSSSKEGTSV.

At 1 to 7 (MDIYDTQ) the chain is on the lumenal side. A helical transmembrane segment spans residues 8 to 28 (TLGVVVFGGFMVVSAIGIFLV). Over 29 to 1605 (STFSMKETSY…GSSSKEGTSV (1577 aa)) the chain is Cytoplasmic. Positions 44 to 88 (NQRKEMAKTHHQKGEKKKKEKTVEKKGKTKKKEEKPNGKIPEHDL) are disordered. A compositionally biased stretch (basic residues) spans 52-63 (THHQKGEKKKKE). Positions 64–88 (KTVEKKGKTKKKEEKPNGKIPEHDL) are enriched in basic and acidic residues. The residue at position 111 (Ser111) is a Phosphoserine. Residues 114–150 (SSVGHTPIATVPAMPQEKLASSPKDRKKKEKKVAKVE) form a disordered region. Lys148 participates in a covalent cross-link: Glycyl lysine isopeptide (Lys-Gly) (interchain with G-Cter in SUMO2). A phosphoserine mark is found at Ser159 and Ser165. Residues 172 to 849 (ATPKEVPMVA…PGPPDCDGPL (678 aa)) are disordered. Tandem repeats lie at residues 196–205 (SQGKKGQGAQ), 206–215 (NQAKKGEGAQ), 216–225 (NQGKKGEGAQ), 226–235 (NQAKKGEGAQ), 236–245 (NQAKKGEGAQ), 246–255 (NQGKKGEGAQ), 256–265 (NQAKKGEGGQ), 266–275 (NQAKKGEGAQ), 276–285 (NQGKKGEGAQ), 286–295 (NQGKKGEGAQ), 296–305 (NQAKKGEGAQ), 306–315 (NQAKKGEGAQ), 316–325 (NQGKKGEGAQ), 326–335 (NQSKKGEGAQ), 336–345 (NQAKKGEGGQ), 346–355 (NQAKKGEGAQ), 356–365 (NQAKKGEGAQ), 366–375 (NQAKKGEGVQ), 376–385 (NQAKKGVEGA), 386–395 (QNQGKKGEAN), 396–405 (QNQAKKGEGG), 406–415 (QNQTKKGEGP), 416–425 (QNQGKKGEAA), 426–435 (QKQDKKIEGA), 436–445 (QNQGKKPEGT), 446–455 (SNQGKKGEGA), 456–465 (QNQGKKGEGA), 466–475 (QNQSKKGEGA), 476–485 (QNQAKKGEGG), 486–495 (QNQAKKGEGA), 496–505 (QNQAKKGEGA), 506–515 (QNQAKKGEGV), 516–525 (QNQAKKGVEG), 527–536 (QNQGKKGEAN), 537–546 (QNQAKKGEGG), 547–556 (QNQTKKGEGP), 557–566 (QNQGKKGEAA), 567–576 (QKQDKKIEGA), 577–586 (QNQGKKPEGT), 587–596 (SNQGKKGEGA), 597–606 (QNQGKKGEGA), 607–616 (QNQGKKGEGA), 617–626 (QNQGKKGEGA), 628–637 (NQGKKGEGAQ), 638–647 (NQGKKGEGAQ), 648–657 (NQGKKGEGAQ), 658–667 (NQGKKGEGPQ), 668–677 (NQAKKGEGAQ), 678–687 (NQGKKGEGAQ), 688–697 (NQGKKGEGAQ), 698–707 (NQGKKAEGVQ), 708–717 (SQSKKGEGTQ), 718–727 (NQGKKGDGNP), 729–738 (QGKKGEGASN), 739–748 (QNRKTDTVAN), 749–758 (QGTKQEGVSN), 759–768 (QVKKSEGSPN), 769–778 (QGKKAEGAPN), 779–788 (QGKKKDGSPS), 789–798 (QAKKVDAAAN), and 799–808 (QGKKSEMAPA). Residues 196–808 (SQGKKGQGAQ…QGKKSEMAPA (613 aa)) form a 61 X 10 AA tandem repeats of [NSQ]-[NKQVGA]-[GSAQKRT]-[ASGDTK]-[KGTQSAV]-[KGAED]-[EQVGIPTDMA]-[EGVAS]-[AGVPETNS]-[AQNGPTVS] region. A compositionally biased stretch (low complexity) spans 197–208 (QGKKGQGAQNQA). Polar residues-rich tracts occupy residues 224 to 258 (AQNQAKKGEGAQNQAKKGEGAQNQGKKGEGAQNQA), 274 to 338 (AQNQ…QNQA), 354 to 378 (AQNQAKKGEGAQNQAKKGEGVQNQA), and 385 to 399 (AQNQGKKGEANQNQA). Over residues 420 to 433 (KKGEAAQKQDKKIE) the composition is skewed to basic and acidic residues. 3 stretches are compositionally biased toward polar residues: residues 435–479 (AQNQ…QNQA), 495–519 (AQNQAKKGEGAQNQAKKGEGVQNQA), and 526–540 (AQNQGKKGEANQNQA). Over residues 561–574 (KKGEAAQKQDKKIE) the composition is skewed to basic and acidic residues. 2 stretches are compositionally biased toward polar residues: residues 576 to 720 (AQNQ…QNQG) and 736 to 769 (ASNQNRKTDTVANQGTKQEGVSNQVKKSEGSPNQ). A Phosphoserine modification is found at Ser786. The segment covering 811–821 (QKASMVQSQEA) has biased composition (polar residues). Ser818 is subject to Phosphoserine. Residue Lys823 forms a Glycyl lysine isopeptide (Lys-Gly) (interchain with G-Cter in SUMO1) linkage. Residue Lys1135 is modified to N6-acetyllysine. Ser1162 and Ser1178 each carry phosphoserine. Disordered regions lie at residues 1460–1481 (MRSHVEDGDVAGSPAVPPAEQD) and 1571–1605 (TTQEQLTKEKDTVKKLQEQLGKAEDGSSSKEGTSV). A compositionally biased stretch (basic and acidic residues) spans 1576-1598 (LTKEKDTVKKLQEQLGKAEDGSS).

In terms of tissue distribution, widely expressed.

The protein resides in the endoplasmic reticulum membrane. Its function is as follows. Acts as a ribosome receptor and mediates interaction between the ribosome and the endoplasmic reticulum membrane. This Mus musculus (Mouse) protein is Ribosome-binding protein 1 (Rrbp1).